We begin with the raw amino-acid sequence, 112 residues long: Ferredoxin-2 (112 aa).

2 consecutive 4Fe-4S ferredoxin-type domains span residues 2–30 (TYVVTDNCIACKYTDCVEVCPVDCFYEGE) and 31–60 (NTLVIHPDECIDCGVCEPECPADAIRPDTE). The [3Fe-4S] cluster site is built by C9 and C17. 4 residues coordinate [4Fe-4S] cluster: C21, C40, C43, and C46. [3Fe-4S] cluster is bound at residue C50. The span at 85–103 (DPMPDHKKYDGETGKREKY) shows a compositional bias: basic and acidic residues. A disordered region spans residues 85–112 (DPMPDHKKYDGETGKREKYFSPNPGTGD).

[4Fe-4S] cluster is required as a cofactor. Requires [3Fe-4S] cluster as cofactor.

In terms of biological role, ferredoxins are iron-sulfur proteins that transfer electrons in a wide variety of metabolic reactions. This is Ferredoxin-2 (fdxA) from Rhodobacter capsulatus (strain ATCC BAA-309 / NBRC 16581 / SB1003).